The chain runs to 310 residues: Protein BIG GRAIN 1 (310 aa).

The disordered stretch occupies residues 77-140; it reads SYRARAPGPH…EKKAKKPGAS (64 aa). Residues 90–106 show a composition bias toward low complexity; sequence SSSSECSSYGGFSSSEA.

The protein belongs to the BIG GRAIN 1 (BG1) plant protein family. In terms of tissue distribution, mostly expressed in the vascular tissues of leaves, culms and young panicles, especially in hulls.

The protein resides in the cell membrane. In terms of biological role, involved in auxin transport. Positive regulator of the auxin signaling pathway involved in gravitropism, plant growth and grain development. The sequence is that of Protein BIG GRAIN 1 from Oryza sativa subsp. japonica (Rice).